The chain runs to 238 residues: Mannose-binding protein A (238 aa).

The signal sequence occupies residues 1 to 17; it reads MLLLPLLVLLCVVSVSS. The segment covering 38–49 has biased composition (basic and acidic residues); sequence DGRDGPKGEKGE. The interval 38-87 is disordered; sequence DGRDGPKGEKGEPGQGLRGLQGPPGKLGPPGSVGAPGSQGPKGQKGDRGD. Residues 39–88 form the Collagen-like domain; sequence GRDGPKGEKGEPGQGLRGLQGPPGKLGPPGSVGAPGSQGPKGQKGDRGDS. 4-hydroxyproline is present on Pro43. A 5-hydroxylysine mark is found at Lys44 and Lys47. Lys44 and Lys47 each carry an O-linked (Gal...) hydroxylysine glycan. Pro50, Pro61, Pro67, Pro73, and Pro78 each carry 4-hydroxyproline. A 5-hydroxylysine mark is found at Lys79 and Lys82. O-linked (Gal...) hydroxylysine glycans are attached at residues Lys79 and Lys82. One can recognise a C-type lectin domain in the interval 143 to 238; the sequence is ALCSELRGTV…SHTAVCEFPA (96 aa). Disulfide bonds link Cys145-Cys234 and Cys212-Cys226. Ca(2+) is bound by residues Asp178, Glu182, Glu202, Asn204, Asp205, Glu210, Asp211, Asn222, and Asp223. A calcium-dependent carbohydrate binding region spans residues 202–210; it reads EPNDHGSGE.

In terms of assembly, homotrimer. Forms higher oligomeric complexes formed by the association of two, three or more homotrimers. Oligomerization occurs in the endoplasmic reticulum. Interacts with MASP1 and MASP2. In terms of processing, hydroxylated on lysine and proline residues within the collagen-like domain. O-glycosylated. O-linked glycans on hydroxylysine residues consist of Glc-Gal disaccharides bound to the oxygen atom of post-translationally added hydroxyl groups. In terms of tissue distribution, detected in blood serum (at protein level).

The protein resides in the secreted. Its function is as follows. Calcium-dependent lectin. Plays a role in the innate immune response by binding mannose, fucose and N-acetylglucosamine moieties on different microorganisms and mediating activation of the lectin complement pathway. Binds to late apoptotic cells, as well as to apoptotic blebs and to necrotic cells, but not to early apoptotic cells, facilitating their uptake by macrophages. The sequence is that of Mannose-binding protein A (Mbl1) from Rattus norvegicus (Rat).